The chain runs to 318 residues: MPMANLLLLIVPILIAMAFLMLTERKILGYMQLRKGPNVVGPYGLLQPFADAMKLFTKEPLKPATSTITLYITAPTLALTIALLLWTPLPMPNPLVNLNLGLLFILATSSLAVYSILWSGWASNSNYALIGALRAVAQTISYEVTLAIILLSTLLMSGSFNLSTLITTQEHLWLLLPSWPLAMMWFISTLAETNRTPFDLAEGESELVSGFNIEYAAGPFALFFMAEYTNIIMMNTLTTTIFLGTTYDALSPELYTTYFVTKTLLLTSLFLWIRTAYPRFRYDQLMHLLWKNFLPLTLALLMWYVSMPITISSIPPQT.

Transmembrane regions (helical) follow at residues 2–22, 68–88, 100–120, 146–166, 171–191, 231–251, 253–273, and 294–314; these read PMANLLLLIVPILIAMAFLML, ITLYITAPTLALTIALLLWTP, LGLLFILATSSLAVYSILWSG, LAIILLSTLLMSGSFNLSTLI, HLWLLLPSWPLAMMWFISTLA, IIMMNTLTTTIFLGTTYDALS, ELYTTYFVTKTLLLTSLFLWI, and LPLTLALLMWYVSMPITISSI.

It belongs to the complex I subunit 1 family. Core subunit of respiratory chain NADH dehydrogenase (Complex I) which is composed of 45 different subunits.

It is found in the mitochondrion inner membrane. It carries out the reaction a ubiquinone + NADH + 5 H(+)(in) = a ubiquinol + NAD(+) + 4 H(+)(out). Core subunit of the mitochondrial membrane respiratory chain NADH dehydrogenase (Complex I) which catalyzes electron transfer from NADH through the respiratory chain, using ubiquinone as an electron acceptor. Essential for the catalytic activity and assembly of complex I. The sequence is that of NADH-ubiquinone oxidoreductase chain 1 (MT-ND1) from Homo sapiens (Human).